The primary structure comprises 701 residues: Glycine--tRNA ligase beta subunit (701 aa).

This sequence belongs to the class-II aminoacyl-tRNA synthetase family. As to quaternary structure, tetramer of two alpha and two beta subunits.

It is found in the cytoplasm. The catalysed reaction is tRNA(Gly) + glycine + ATP = glycyl-tRNA(Gly) + AMP + diphosphate. This chain is Glycine--tRNA ligase beta subunit, found in Thiobacillus denitrificans (strain ATCC 25259 / T1).